The primary structure comprises 230 residues: 7-cyano-7-deazaguanine synthase (230 aa).

ATP is bound at residue 7–17 (CSGGLDSVSLA). 4 residues coordinate Zn(2+): Cys185, Cys193, Cys196, and Cys199.

This sequence belongs to the QueC family. Requires Zn(2+) as cofactor.

It catalyses the reaction 7-carboxy-7-deazaguanine + NH4(+) + ATP = 7-cyano-7-deazaguanine + ADP + phosphate + H2O + H(+). It participates in purine metabolism; 7-cyano-7-deazaguanine biosynthesis. Its function is as follows. Catalyzes the ATP-dependent conversion of 7-carboxy-7-deazaguanine (CDG) to 7-cyano-7-deazaguanine (preQ(0)). In Ruegeria pomeroyi (strain ATCC 700808 / DSM 15171 / DSS-3) (Silicibacter pomeroyi), this protein is 7-cyano-7-deazaguanine synthase.